We begin with the raw amino-acid sequence, 308 residues long: tRNA dimethylallyltransferase (308 aa).

Residue 14 to 21 (GPTASGKT) coordinates ATP. Substrate is bound at residue 16 to 21 (TASGKT). Interaction with substrate tRNA stretches follow at residues 39 to 42 (DSAL), 163 to 167 (QRLSR), and 244 to 249 (RCVGYR).

The protein belongs to the IPP transferase family. As to quaternary structure, monomer. The cofactor is Mg(2+).

It catalyses the reaction adenosine(37) in tRNA + dimethylallyl diphosphate = N(6)-dimethylallyladenosine(37) in tRNA + diphosphate. Catalyzes the transfer of a dimethylallyl group onto the adenine at position 37 in tRNAs that read codons beginning with uridine, leading to the formation of N6-(dimethylallyl)adenosine (i(6)A). The chain is tRNA dimethylallyltransferase from Shewanella oneidensis (strain ATCC 700550 / JCM 31522 / CIP 106686 / LMG 19005 / NCIMB 14063 / MR-1).